The sequence spans 433 residues: UPF0597 protein DNO_0106 (433 aa).

Belongs to the UPF0597 family.

In Dichelobacter nodosus (strain VCS1703A), this protein is UPF0597 protein DNO_0106.